Here is a 363-residue protein sequence, read N- to C-terminus: Sulfate/thiosulfate import ATP-binding protein CysA (363 aa).

The ABC transporter domain occupies 3–237 (IEINNISKYF…PATRFVLEFL (235 aa)). An ATP-binding site is contributed by 35–42 (GPSGSGKT).

The protein belongs to the ABC transporter superfamily. Sulfate/tungstate importer (TC 3.A.1.6) family. In terms of assembly, the complex is composed of two ATP-binding proteins (CysA), two transmembrane proteins (CysT and CysW) and a solute-binding protein (CysP).

Its subcellular location is the cell inner membrane. It carries out the reaction sulfate(out) + ATP + H2O = sulfate(in) + ADP + phosphate + H(+). The catalysed reaction is thiosulfate(out) + ATP + H2O = thiosulfate(in) + ADP + phosphate + H(+). Its function is as follows. Part of the ABC transporter complex CysAWTP involved in sulfate/thiosulfate import. Responsible for energy coupling to the transport system. This chain is Sulfate/thiosulfate import ATP-binding protein CysA, found in Yersinia pestis.